Consider the following 1098-residue polypeptide: Ran-binding protein 16 (1098 aa).

Belongs to the exportin family. In terms of assembly, binds to nucleoporins and the GTP-bound form of Ran.

It is found in the cytoplasm. The protein resides in the nucleus. Functionally, may function as a nuclear transport receptor. This Drosophila melanogaster (Fruit fly) protein is Ran-binding protein 16 (Ranbp16).